A 342-amino-acid polypeptide reads, in one-letter code: MSKAYEQSGVNIHAGYEAVERMSSHVKRTMRKEVIGGLGGFGATFDLSQLNMTAPVLVSGTDGVGTKLKLAIDYGKHDSIGIDAVAMCVNDILTTGAEPLYFLDYIATNKVVPEVIEQIVKGISDACVETNTALIGGETAEMGEMYHEGEYDVAGFAVGAVEKDDYVDSSEVKEGQVVIGLASSGIHSNGYSLVRKLINESGIDLASNFDNRPFIDVFLEPTKLYVKPVLALKKEVSIKAMNHITGGGFYENIPRALPAGYAARIDTTSFPTPKIFDWLQQQGNIDTNEMYNIFNMGIGYTVIVDEKDASRALKILAEQNVEAYQIGHIMKNESTAIELLGV.

It belongs to the AIR synthase family.

It localises to the cytoplasm. The enzyme catalyses 2-formamido-N(1)-(5-O-phospho-beta-D-ribosyl)acetamidine + ATP = 5-amino-1-(5-phospho-beta-D-ribosyl)imidazole + ADP + phosphate + H(+). It participates in purine metabolism; IMP biosynthesis via de novo pathway; 5-amino-1-(5-phospho-D-ribosyl)imidazole from N(2)-formyl-N(1)-(5-phospho-D-ribosyl)glycinamide: step 2/2. The protein is Phosphoribosylformylglycinamidine cyclo-ligase of Staphylococcus aureus (strain MSSA476).